Here is a 65-residue protein sequence, read N- to C-terminus: Large ribosomal subunit protein bL35 (65 aa).

The protein belongs to the bacterial ribosomal protein bL35 family.

The protein is Large ribosomal subunit protein bL35 of Aromatoleum aromaticum (strain DSM 19018 / LMG 30748 / EbN1) (Azoarcus sp. (strain EbN1)).